We begin with the raw amino-acid sequence, 835 residues long: Protein translocase subunit SecA (835 aa).

ATP-binding positions include Q85, 103–107 (GEGKT), and D492. 4 residues coordinate Zn(2+): C819, C821, C830, and C831.

Belongs to the SecA family. Monomer and homodimer. Part of the essential Sec protein translocation apparatus which comprises SecA, SecYEG and auxiliary proteins SecDF. Other proteins may also be involved. Zn(2+) serves as cofactor.

The protein resides in the cell membrane. It localises to the cytoplasm. The enzyme catalyses ATP + H2O + cellular proteinSide 1 = ADP + phosphate + cellular proteinSide 2.. In terms of biological role, part of the Sec protein translocase complex. Interacts with the SecYEG preprotein conducting channel. Has a central role in coupling the hydrolysis of ATP to the transfer of proteins into and across the cell membrane, serving as an ATP-driven molecular motor driving the stepwise translocation of polypeptide chains across the membrane. This chain is Protein translocase subunit SecA, found in Clostridium botulinum (strain ATCC 19397 / Type A).